Here is a 630-residue protein sequence, read N- to C-terminus: Adagio-like protein 1 (630 aa).

The interval 1–36 (MEWDSESDGAGSIGAGEEEEEEEEEEEGGFGGGGGG) is disordered. Over residues 16–28 (GEEEEEEEEEEEG) the composition is skewed to acidic residues. A PAS domain is found at 48–127 (IEGMLRASGP…SEIRKCIDNG (80 aa)). An S-4a-FMN cysteine modification is found at Cys-95. One can recognise an F-box domain in the interval 216 to 262 (SSLFQLTDEVLCQSILSRLSPRDIASVSSVCRRLYLLTRNEDLWRMV). 4 Kelch repeats span residues 378 to 428 (LLVV…TLDG), 430 to 481 (KLVV…VYGG), 483 to 535 (KILM…AGPP), and 549 to 601 (RVLI…VVGG).

It belongs to the ADAGIO family. Post-translationally, FMN binds covalently to cysteine after exposure to blue light and is reversed in the dark.

Its subcellular location is the nucleus. It functions in the pathway protein modification; protein ubiquitination. Component of an E3 ubiquitin ligase complex that plays a central role in blue light-dependent circadian cycles. Acts as a blue light photoreceptor, due to the presence of FMN, that mediates light-regulated protein degradation of critical clock components by targeting them to the proteasome complex. The sequence is that of Adagio-like protein 1 from Oryza sativa subsp. japonica (Rice).